A 152-amino-acid polypeptide reads, in one-letter code: FMN reductase (NADH) RutF (152 aa).

Belongs to the non-flavoprotein flavin reductase family. RutF subfamily.

It catalyses the reaction FMNH2 + NAD(+) = FMN + NADH + 2 H(+). Functionally, catalyzes the reduction of FMN to FMNH2 which is used to reduce pyrimidine by RutA via the Rut pathway. The sequence is that of FMN reductase (NADH) RutF from Shigella sonnei (strain Ss046).